Reading from the N-terminus, the 600-residue chain is Putative DNA 3'-5' helicase Rad25 (600 aa).

The Helicase ATP-binding domain occupies 253–402 (VDRFEDASAG…DIYTLVGRPI (150 aa)). 266–273 (GPPGSGKT) is a binding site for ATP. Residues 356–359 (DEVH) carry the DEAH box motif. The Helicase C-terminal domain occupies 457-600 (EIEHLVDQHG…VTESDASHSP (144 aa)). The interval 569-600 (RGTEEEDHARSRMRHLSTKGVRVTESDASHSP) is disordered. The segment covering 590 to 600 (RVTESDASHSP) has biased composition (basic and acidic residues).

The protein belongs to the helicase family. RAD25/XPB subfamily.

The enzyme catalyses Couples ATP hydrolysis with the unwinding of duplex DNA by translocating in the 3'-5' direction.. The catalysed reaction is ATP + H2O = ADP + phosphate + H(+). The sequence is that of Putative DNA 3'-5' helicase Rad25 from Halobacterium salinarum (strain ATCC 700922 / JCM 11081 / NRC-1) (Halobacterium halobium).